The following is a 567-amino-acid chain: MPVVDIDPDELRRLTGHRSKDDDELRQDLFGLGIEYEGETEDGDFKLEFEADRLDRLSVEGIARSLRYHAGDDRGVDIPDTNAPEWAIDVTDVPADRPYVTGAVIRGVDLDADALDSLIQLQEKLHATMGRKRAKGAIGIHDLAMLKGDTVDGDGTAARSLTYTGIDPDGDTFVPLDDDAERTPADVLTEHPTGETYADLLADHDTYPAIYDDIGLFSFPPVINGRRTEVTTDSRELFVELTGTDQWTIDRMCAIICYALDARGATIEDVTVDYPDRELHRPDFAVRTKHVSHDRIETLLGVEFTTEAVVDLAERAGLDATPTDDGYDVEIPPYRVDVRHPVDVVDDLGRAYDFNDLTPRYPDVNTIGGRTESSRLERSVRQALVGLGFEDLLNFNMTSEAENFDRMRLTPDHDAVGAAQPATIAEPYSQDFTILRTWALPSLAMVLETNTHHAYPQDLAEVGFAAHADGDTQTGVAERRTVAAVLARNDASYEDAKARLQALCDEFAVALETPPTTHPSFIDGRAATIEIDGQPAGVIGELHPGVIVEHDVEVPVAGFEFELDALR.

The B5 domain occupies 284–359 (FAVRTKHVSH…RAYDFNDLTP (76 aa)). Positions 337, 343, 346, and 347 each coordinate Mg(2+).

Belongs to the phenylalanyl-tRNA synthetase beta subunit family. Type 2 subfamily. In terms of assembly, tetramer of two alpha and two beta subunits. Mg(2+) serves as cofactor.

It is found in the cytoplasm. It catalyses the reaction tRNA(Phe) + L-phenylalanine + ATP = L-phenylalanyl-tRNA(Phe) + AMP + diphosphate + H(+). In Halobacterium salinarum (strain ATCC 29341 / DSM 671 / R1), this protein is Phenylalanine--tRNA ligase beta subunit.